A 491-amino-acid polypeptide reads, in one-letter code: 3-phosphoinositide-dependent protein kinase 1 (491 aa).

Residues 44–311 (FEFGKIYGVG…YVALKRHPFF (268 aa)) enclose the Protein kinase domain. Residues 54–56 (SYS) and K73 contribute to the ATP site. The segment at 75 to 119 (MDKKFITKENKTAYVKLERIVLDQLEHPGIIKLYFTFQDTSSLYM) is PIF-pocket. The PIF-binding stretch occupies residues 77–112 (KKFITKENKTAYVKLERIVLDQLEHPGIIKLYFTFQ). Residues 122–124 (ESC) and E128 each bind ATP. The active-site Proton acceptor is D167. E171 contacts ATP. Phosphoserine is present on S177. D185 provides a ligand contact to ATP. The interval 185 to 222 (DFGSVKPMQDSQITVLPNAASDDKACTFVGTAAYVPPE) is activation loop. T211 carries the phosphothreonine; by autocatalysis modification. A phosphoserine mark is found at S276 and S337. Positions 321-377 (SQTPPKLAPDPASQTASPERDDTHGSPWNLTHIGDSLATQNEGHSAPPTSSESSGSI) are disordered. The span at 365-376 (SAPPTSSESSGS) shows a compositional bias: low complexity. Residue S382 is modified to Phosphoserine. The PH domain maps to 386–491 (FDSRWQQFLE…KKAIETLQNR (106 aa)).

Belongs to the protein kinase superfamily. AGC Ser/Thr protein kinase family. PDPK1 subfamily. As to quaternary structure, interacts with AGC1-5 and AGC1-7. Interacts with the C-terminal PIF domain of the protein kinases D6PK/AGC1-1, OXI1/AGC2-1 and PID. Phosphorylation on Thr-211 in the activation loop is required for full activity. PDK1 itself can autophosphorylate Thr-211, leading to its own activation. In terms of tissue distribution, ubiquitous.

It is found in the cytoplasm. The protein localises to the membrane. It carries out the reaction L-seryl-[protein] + ATP = O-phospho-L-seryl-[protein] + ADP + H(+). It catalyses the reaction L-threonyl-[protein] + ATP = O-phospho-L-threonyl-[protein] + ADP + H(+). Activated by phosphatidic acid (PA) and in response to the fungal elicitor xylanase. Functionally, may couple lipid signals to the activation-loop phosphorylation of several protein kinases of the so-called AGC kinase family. Interacts via its pleckstrin homology domain with phosphatidic acid, PtdIns3P and PtdIns(3,4)P2 and to a lesser extent with PtdIns(4,5)P2 and PtdIns4P. May play a general role in signaling processes controlling the pathogen/stress response, polar auxin transport and development. Transphosphorylates the AGC protein kinases OXI1/AGC2-1, PK1/S6K1, PK19/S6K2 and PID resulting in their activation. The sequence is that of 3-phosphoinositide-dependent protein kinase 1 (PDPK1) from Arabidopsis thaliana (Mouse-ear cress).